A 327-amino-acid chain; its full sequence is MRPRIIVFLFQVLVVIKGTKLKYYNDELCGRQSTYTSFMLTDAAGNTGNPTHLAPWAVQIRVKARKGDFEVICGGTLITLKHVLTAAHCFQKHFGAKKEGGEENSMSGRYCESNQRFTDSEILTRTVVTVGAMCTRLEQKYGCVNEKQNGKTLKISRFAIGDFYKTHCEQGNDIVILELESTIDDVEGANYACLPFLPEVNIQSGANVTSFGWGSDPGKGFDNAAFPMIQVLTLATETLATCEENWGTSIPFDSFCTAEEEDKNVCSGDSGGGLTFHQSDSAREFIIAIVSYGSDCVQLIGGSEPRSQINTDVRKHQKFIVNFINQA.

Positions 1–21 (MRPRIIVFLFQVLVVIKGTKL) are cleaved as a signal peptide. One can recognise a Peptidase S1 domain in the interval 43-327 (AAGNTGNPTH…KFIVNFINQA (285 aa)). Cysteine 73 and cysteine 89 form a disulfide bridge. Active-site charge relay system residues include histidine 88 and aspartate 173. N-linked (GlcNAc...) asparagine glycosylation is present at asparagine 207. 2 cysteine pairs are disulfide-bonded: cysteine 242–cysteine 256 and cysteine 266–cysteine 296. The Charge relay system role is filled by serine 270.

The protein belongs to the peptidase S1 family. Specifically expressed in the male gonad including the seminal vesicle, the valve region and the vas deferens.

The protein resides in the secreted. The protein localises to the cytoplasmic vesicle. Its subcellular location is the secretory vesicle lumen. With respect to regulation, in the male gonad, probably maintained inactive by swm-1. In terms of biological role, serine protease which, in males, acts as a promoting signal during mating to activate sperm. The protein is Trypsin-like protease try-5 of Caenorhabditis elegans.